A 120-amino-acid chain; its full sequence is uncharacterized protein (120 aa).

The Nudix hydrolase domain occupies 29-120 (QRQAAVLVPI…QVTPVVGIIP (92 aa)). Residues 67–89 (GAVDNSDATLIAAALREAQEEVA) carry the Nudix box motif. Positions 83 and 87 each coordinate Mg(2+).

This sequence belongs to the Nudix hydrolase family. PCD1 subfamily. The cofactor is Mn(2+). It depends on Mg(2+) as a cofactor.

Its function is as follows. Probably mediates the hydrolysis of some nucleoside diphosphate derivatives. This is an uncharacterized protein from Klebsiella aerogenes (Enterobacter aerogenes).